Reading from the N-terminus, the 103-residue chain is Large ribosomal subunit protein uL24 (103 aa).

Belongs to the universal ribosomal protein uL24 family. As to quaternary structure, part of the 50S ribosomal subunit.

In terms of biological role, one of two assembly initiator proteins, it binds directly to the 5'-end of the 23S rRNA, where it nucleates assembly of the 50S subunit. Functionally, one of the proteins that surrounds the polypeptide exit tunnel on the outside of the subunit. This chain is Large ribosomal subunit protein uL24, found in Alkaliphilus metalliredigens (strain QYMF).